We begin with the raw amino-acid sequence, 191 residues long: Elongation factor P (191 aa).

It belongs to the elongation factor P family.

The protein resides in the cytoplasm. The protein operates within protein biosynthesis; polypeptide chain elongation. Functionally, involved in peptide bond synthesis. Stimulates efficient translation and peptide-bond synthesis on native or reconstituted 70S ribosomes in vitro. Probably functions indirectly by altering the affinity of the ribosome for aminoacyl-tRNA, thus increasing their reactivity as acceptors for peptidyl transferase. This is Elongation factor P from Ralstonia pickettii (strain 12J).